Reading from the N-terminus, the 195-residue chain is CASP-like protein 1B1 (195 aa).

At 1–15 (MAKLALAATSGKSCK) the chain is on the cytoplasmic side. Residues 16 to 36 (ILLGLRLLAFSATLSAAIVMG) form a helical membrane-spanning segment. Residues 37–67 (LNKETETFVVGKVGNTPIKATFTAKFDHTPA) are Extracellular-facing. Residues 68-88 (FVFFVVANAMVSFHNLLMIAL) form a helical membrane-spanning segment. The Cytoplasmic portion of the chain corresponds to 89-104 (QIFGGKMEFTGFRLLS). A helical membrane pass occupies residues 105–125 (VAILDMLNVTLISAAANAAAF). The Extracellular segment spans residues 126–154 (MAEVGKNGNKHARWDKICDRFATYCDHGA). Residues 155–175 (GALIAAFAGVILMLIISAASI) traverse the membrane as a helical segment. The Cytoplasmic segment spans residues 176 to 195 (SRLAQQNKCCSTTASPSVVP).

It belongs to the Casparian strip membrane proteins (CASP) family. Homodimer and heterodimers.

Its subcellular location is the cell membrane. This is CASP-like protein 1B1 from Arabidopsis lyrata subsp. lyrata (Lyre-leaved rock-cress).